The chain runs to 192 residues: MSEYLLLLISTVLVNNFVLVKFLGLCPFMGVSSKLESAIGMSMATTFVLTLASILSYLVNQYLLLPFDLGYLRTMSFILVIAVVVQFTEMVVQKTSAALHRALGIYLPLITTNCAVLGVALLNVNEKHDFIQSAIYGFGAAVGFSLVLILFSAMRERLAAADVPMPFKGGAIAMITAGLMSLAFMGFTGLVK.

The next 6 membrane-spanning stretches (helical) occupy residues 5–25 (LLLLISTVLVNNFVLVKFLGL), 39–59 (IGMSMATTFVLTLASILSYLV), 65–85 (LPFDLGYLRTMSFILVIAVVV), 102–122 (ALGIYLPLITTNCAVLGVALL), 134–154 (AIYGFGAAVGFSLVLILFSAM), and 171–191 (AIAMITAGLMSLAFMGFTGLV).

This sequence belongs to the NqrDE/RnfAE family. The complex is composed of six subunits: RnfA, RnfB, RnfC, RnfD, RnfE and RnfG.

The protein resides in the cell inner membrane. Its function is as follows. Part of a membrane-bound complex that couples electron transfer with translocation of ions across the membrane. The protein is Ion-translocating oxidoreductase complex subunit A of Shewanella sp. (strain MR-4).